Here is a 243-residue protein sequence, read N- to C-terminus: Ribosomal RNA small subunit methyltransferase J (243 aa).

Residues Glu112–Arg113 and Asp164 contribute to the S-adenosyl-L-methionine site.

The protein belongs to the methyltransferase superfamily. RsmJ family.

It is found in the cytoplasm. It carries out the reaction guanosine(1516) in 16S rRNA + S-adenosyl-L-methionine = N(2)-methylguanosine(1516) in 16S rRNA + S-adenosyl-L-homocysteine + H(+). In terms of biological role, specifically methylates the guanosine in position 1516 of 16S rRNA. The polypeptide is Ribosomal RNA small subunit methyltransferase J (Legionella pneumophila (strain Corby)).